Reading from the N-terminus, the 126-residue chain is Holo-[acyl-carrier-protein] synthase (126 aa).

Mg(2+) is bound by residues aspartate 9 and glutamate 58.

It belongs to the P-Pant transferase superfamily. AcpS family. Mg(2+) serves as cofactor.

It localises to the cytoplasm. It carries out the reaction apo-[ACP] + CoA = holo-[ACP] + adenosine 3',5'-bisphosphate + H(+). Functionally, transfers the 4'-phosphopantetheine moiety from coenzyme A to a Ser of acyl-carrier-protein. The polypeptide is Holo-[acyl-carrier-protein] synthase (Escherichia coli O139:H28 (strain E24377A / ETEC)).